Consider the following 130-residue polypeptide: uncharacterized protein (130 aa).

The first 26 residues, 1–26, serve as a signal peptide directing secretion; it reads MKFIYKLLFILSIVLFLFNNIITING. The N-linked (GlcNAc...) asparagine glycan is linked to N88.

Its subcellular location is the secreted. This is an uncharacterized protein from Dictyostelium discoideum (Social amoeba).